A 198-amino-acid polypeptide reads, in one-letter code: Probable host range protein 2-3 (198 aa).

The tract at residues 153–198 is disordered; sequence GENGYEDSTEEEDNEEDTDGVCLYCLEEEEEEDEDEDEDEDEDEEE. Acidic residues-rich tracts occupy residues 156-171 and 178-198; these read GYED…EDTD and LEEE…DEEE.

Belongs to the poxviridae C7 protein family.

Plays a role for multiplication of the virus in different cell types. This is Probable host range protein 2-3 from Rabbit fibroma virus (strain Kasza) (RFV).